Here is a 367-residue protein sequence, read N- to C-terminus: Glutamate 5-kinase (367 aa).

Lys10 lines the ATP pocket. Substrate is bound by residues Ser50, Asp137, and Asn149. ATP-binding positions include 169-170 and 211-217; these read TD and TGGMSTK. Residues 275–353 form the PUA domain; the sequence is AGEITVDEGA…QQIDAILGYE (79 aa).

This sequence belongs to the glutamate 5-kinase family.

It is found in the cytoplasm. The enzyme catalyses L-glutamate + ATP = L-glutamyl 5-phosphate + ADP. Its pathway is amino-acid biosynthesis; L-proline biosynthesis; L-glutamate 5-semialdehyde from L-glutamate: step 1/2. In terms of biological role, catalyzes the transfer of a phosphate group to glutamate to form L-glutamate 5-phosphate. In Salmonella arizonae (strain ATCC BAA-731 / CDC346-86 / RSK2980), this protein is Glutamate 5-kinase.